The chain runs to 297 residues: 3-mercaptopyruvate sulfurtransferase (297 aa).

An N-acetylalanine modification is found at A2. The region spanning 25 to 144 (SSQPLKLLDA…WLNQNLPISS (120 aa)) is the Rhodanese 1 domain. Phosphoserine is present on S35. At K40 the chain carries N6-acetyllysine; alternate. K40 is modified (N6-succinyllysine; alternate). The hinge stretch occupies residues 145–160 (GKSHSEPAEFSAQLDP). Residues K146 and K164 each carry the N6-succinyllysine modification. The Rhodanese 2 domain occupies 174 to 288 (DARRFQVVDA…WYMRAQPEHI (115 aa)). R188 serves as a coordination point for substrate. C248 serves as the catalytic Cysteine persulfide intermediate.

Monomer (active form). Homodimer; disulfide-linked (inactive form). Expressed in the brain and retina. In the retina, localized to the inner and outer plexiform layer, the inner and outer nuclear layer and the outer segments of photoreceptors. In the brain, localized to neurons of mitral cell layers, glomerular, and external plexiform layers in the olfactory bulb. Also found in Purkinje cell stomata and proximal dendrites. In the spinal cord, localized to large neurons. In the cerebral cortex, localized to pyramidial neurons in layers II/III and V, and in layers I-VI of neocortical areas. In the hippocampus, found in CA1 and CA3 pyramidal cells.

It localises to the cytoplasm. Its subcellular location is the mitochondrion. The protein resides in the synapse. It is found in the synaptosome. The catalysed reaction is 2-oxo-3-sulfanylpropanoate + [thioredoxin]-dithiol = [thioredoxin]-disulfide + hydrogen sulfide + pyruvate + H(+). With respect to regulation, by oxidative stress, and thioredoxin. Under oxidative stress conditions, the catalytic cysteine site is converted to a sulfenate which inhibits the MPST enzyme activity. Reduced thioredoxin cleaves an intersubunit disulfide bond to turn on the redox switch and reactivate the enzyme. Inhibited by different oxidants, hydrogen peroxide and tetrathionate. Its function is as follows. Transfer of a sulfur ion to cyanide or to other thiol compounds. Also has weak rhodanese activity. Detoxifies cyanide and is required for thiosulfate biosynthesis. Acts as an antioxidant. In combination with cysteine aminotransferase (CAT), contributes to the catabolism of cysteine and is an important producer of hydrogen sulfide in the brain, retina and vascular endothelial cells. Hydrogen sulfide H(2)S is an important synaptic modulator, signaling molecule, smooth muscle contractor and neuroprotectant. Its production by the 3MST/CAT pathway is regulated by calcium ions. This is 3-mercaptopyruvate sulfurtransferase (Mpst) from Mus musculus (Mouse).